The chain runs to 159 residues: Aspartate carbamoyltransferase regulatory chain (159 aa).

Residues cysteine 108, cysteine 113, cysteine 138, and cysteine 141 each coordinate Zn(2+).

The protein belongs to the PyrI family. Contains catalytic and regulatory chains. Zn(2+) is required as a cofactor.

Involved in allosteric regulation of aspartate carbamoyltransferase. The sequence is that of Aspartate carbamoyltransferase regulatory chain from Thermofilum pendens (strain DSM 2475 / Hrk 5).